Consider the following 524-residue polypeptide: Cytochrome P450 monooxygenase alt1 (524 aa).

The helical transmembrane segment at I24–L44 threads the bilayer. Residue C469 participates in heme binding.

The protein belongs to the cytochrome P450 family. Requires heme as cofactor.

Its subcellular location is the membrane. The protein operates within secondary metabolite biosynthesis. Functionally, cytochrome P450 monooxygenase; part of the gene cluster that mediates the biosynthesis of alternapyrone derivatives. Alternapyrone is a decaketide with octa-methylation from methionine on every C2 unit except the third unit. All the domains in the polyketide synthase alt5 are apparently involved in alternapyrone synthesis, that is, the 8 CMeT, 7 KR, 7 DH, and 4 ER reactions in the 9 KS-mediated condensation steps required for alternapyrone synthesis. the alternapyrone produced by alt5 might be intensively modified by cytochrome P450 monooxygenases alt1, alt2 and alt3 and FAD-dependent oxidoreductase alt4 present in the alt gene cluster. This chain is Cytochrome P450 monooxygenase alt1, found in Alternaria solani.